The following is a 568-amino-acid chain: Acetate--CoA ligase CCL3 (568 aa).

ATP contacts are provided by residues 204 to 212 (TSGTTASPK), 340 to 345 (HTYGLS), aspartate 437, 449 to 452 (IKDR), and lysine 547. Residues 272–340 (TAKGVYSAIA…MSEKGFKVAH (69 aa)) are SBD1. An SBD2 region spans residues 341 to 417 (TYGLSETYGP…MRGNAVMKGY (77 aa)).

It belongs to the ATP-dependent AMP-binding enzyme family. In terms of tissue distribution, mostly expressed in glandular trichomes (lupulin glands) after flowering and in old leaves, and, to a lower extent, in stems, young leaves, cones and flowers.

It localises to the cytoplasm. Its subcellular location is the cytosol. The catalysed reaction is acetate + ATP + CoA = acetyl-CoA + AMP + diphosphate. It carries out the reaction propanoate + ATP + CoA = propanoyl-CoA + AMP + diphosphate. It catalyses the reaction butanoate + ATP + CoA = butanoyl-CoA + AMP + diphosphate. The enzyme catalyses 3-methylbutanoate + ATP + CoA = 3-methylbutanoyl-CoA + AMP + diphosphate. The catalysed reaction is pentanoate + ATP + CoA = pentanoyl-CoA + AMP + diphosphate. It carries out the reaction hexanoate + ATP + CoA = hexanoyl-CoA + AMP + diphosphate. It catalyses the reaction 2-methylpropanoate + ATP + CoA = 2-methylpropanoyl-CoA + AMP + diphosphate. The enzyme catalyses 2-methylbutanoate + ATP + CoA = 2-methylbutanoyl-CoA + AMP + diphosphate. The catalysed reaction is 2-methylpentanoate + ATP + CoA = 2-methylpentanoyl-CoA + AMP + diphosphate. It carries out the reaction 3-methylpentanoate + ATP + CoA = 3-methylpentanoyl-CoA + AMP + diphosphate. It catalyses the reaction 4-methylpentanoate + ATP + CoA = 4-methylpentanoyl-CoA + AMP + diphosphate. It functions in the pathway secondary metabolite biosynthesis. Involved in the biosynthesis of prenylated phenolics natural products which contribute to the bitter taste of beer and display broad biological activities. Catalyzes the ligation of CoA on propanoate to produce propanoyl-CoA. Can also use 2-methylpropanoate (isobutyric acid), acetate, butanoate, isovalerate, pentanoate, hexanoate, 2-methylbutanoate, 2-methylpentanoate, 3-methylpentanoate and 4-methylpentanoate as substrates with a lower efficiency. Triggers the formation of very short chain acyl-CoAs from the corresponding fatty acids, including acetic acid, propanoic acid, butyric acid and its isomer. The protein is Acetate--CoA ligase CCL3 of Humulus lupulus (European hop).